Consider the following 398-residue polypeptide: S-adenosylmethionine synthase (398 aa).

Positions M1 to M21 are disordered. Residue H17 coordinates ATP. D19 is a binding site for Mg(2+). K(+) is bound at residue E45. L-methionine contacts are provided by E58 and Q101. Residues Q101–Q111 are flexible loop. ATP contacts are provided by residues D177–K179, R244–F245, D253, R259–K260, A276, and K280. D253 contributes to the L-methionine binding site. L-methionine is bound at residue K284.

This sequence belongs to the AdoMet synthase family. In terms of assembly, homotetramer; dimer of dimers. Mg(2+) is required as a cofactor. Requires K(+) as cofactor.

Its subcellular location is the cytoplasm. The catalysed reaction is L-methionine + ATP + H2O = S-adenosyl-L-methionine + phosphate + diphosphate. It participates in amino-acid biosynthesis; S-adenosyl-L-methionine biosynthesis; S-adenosyl-L-methionine from L-methionine: step 1/1. Functionally, catalyzes the formation of S-adenosylmethionine (AdoMet) from methionine and ATP. The overall synthetic reaction is composed of two sequential steps, AdoMet formation and the subsequent tripolyphosphate hydrolysis which occurs prior to release of AdoMet from the enzyme. The polypeptide is S-adenosylmethionine synthase (Oceanobacillus iheyensis (strain DSM 14371 / CIP 107618 / JCM 11309 / KCTC 3954 / HTE831)).